A 538-amino-acid polypeptide reads, in one-letter code: Mitochondria-eating protein (538 aa).

Positions 1-273 (MAENLKRLVS…PRSRSCSRSR (273 aa)) are interaction with YWHAG/14-3-3 protein gamma. S85 carries the post-translational modification Phosphoserine. Positions 97–137 (SKVPSLQDTFDRERHKDPSPRDRDMQQLDSNLNSTRSQCNQ) are disordered. A compositionally biased stretch (basic and acidic residues) spans 105–122 (TFDRERHKDPSPRDRDMQ). 2 coiled-coil regions span residues 118 to 187 (DRDM…RHRN) and 219 to 256 (DQQD…RSSR). Polar residues predominate over residues 123-137 (QLDSNLNSTRSQCNQ). S156 and S159 each carry phosphoserine. Disordered stretches follow at residues 173 to 226 (QLKS…TEAM) and 247 to 294 (KSAL…SKLS). The segment covering 181-210 (EDARHRNTDQRSSENRRSEPWSLEERKREQ) has biased composition (basic and acidic residues). Positions 211-224 (WNSLKQNADQQDTE) are enriched in polar residues. Over residues 253–278 (RSSRSRSPSPAPRSRSCSRSRSASPS) the composition is skewed to low complexity. 2 positions are modified to phosphoserine: S287 and S509.

It belongs to the MIEAP family. As to quaternary structure, interacts (via coiled-coil domains) with BNIP3L (via BH3 domain). Interacts (via coiled-coil domains) with BNIP3 (via BH3 domain). Interacts with YWHAG/14-3-3 protein gamma; a protein that also plays a role in MALM.

Its subcellular location is the cytoplasm. The protein localises to the cytosol. It is found in the mitochondrion outer membrane. The protein resides in the mitochondrion matrix. Its function is as follows. Key regulator of mitochondrial quality that mediates the repairing or degradation of unhealthy mitochondria in response to mitochondrial damage. Mediator of mitochondrial protein catabolic process (also named MALM) by mediating the degradation of damaged proteins inside mitochondria by promoting the accumulation in the mitochondrial matrix of hydrolases that are characteristic of the lysosomal lumen. Also involved in mitochondrion degradation of damaged mitochondria by promoting the formation of vacuole-like structures (named MIV), which engulf and degrade unhealthy mitochondria by accumulating lysosomes. The physical interaction of SPATA18/MIEAP, BNIP3 and BNIP3L/NIX at the mitochondrial outer membrane regulates the opening of a pore in the mitochondrial double membrane in order to mediate the translocation of lysosomal proteins from the cytoplasm to the mitochondrial matrix. Binds cardiolipin. May form molecular condensates (non-membrane-bounded organelles) within mitochondria that compartmentalize and promote cardiolipin metabolism. The protein is Mitochondria-eating protein (SPATA18) of Homo sapiens (Human).